We begin with the raw amino-acid sequence, 85 residues long: Small ribosomal subunit protein uS17 (85 aa).

This sequence belongs to the universal ribosomal protein uS17 family. In terms of assembly, part of the 30S ribosomal subunit.

One of the primary rRNA binding proteins, it binds specifically to the 5'-end of 16S ribosomal RNA. The sequence is that of Small ribosomal subunit protein uS17 from Pseudoalteromonas translucida (strain TAC 125).